The primary structure comprises 382 residues: Alkanesulfonate monooxygenase (382 aa).

The protein belongs to the SsuD family. In terms of assembly, homotetramer.

The enzyme catalyses an alkanesulfonate + FMNH2 + O2 = an aldehyde + FMN + sulfite + H2O + 2 H(+). Its function is as follows. Catalyzes the desulfonation of aliphatic sulfonates. The polypeptide is Alkanesulfonate monooxygenase (Yersinia pestis bv. Antiqua (strain Antiqua)).